Consider the following 102-residue polypeptide: Large ribosomal subunit protein uL24 (102 aa).

Residues 1-22 (MHVKKGDTVQVMSGKDKGKQGV) form a disordered region.

It belongs to the universal ribosomal protein uL24 family. Part of the 50S ribosomal subunit.

Its function is as follows. One of two assembly initiator proteins, it binds directly to the 5'-end of the 23S rRNA, where it nucleates assembly of the 50S subunit. One of the proteins that surrounds the polypeptide exit tunnel on the outside of the subunit. The sequence is that of Large ribosomal subunit protein uL24 from Exiguobacterium sp. (strain ATCC BAA-1283 / AT1b).